A 538-amino-acid chain; its full sequence is Lipid scramblase CLPTM1L (538 aa).

At M1–S10 the chain is on the cytoplasmic side. The helical transmembrane segment at L11–V31 threads the bilayer. Topologically, residues Y32–L284 are extracellular. N91, N101, and N229 each carry an N-linked (GlcNAc...) asparagine glycan. The chain crosses the membrane as a helical span at residues Y285–F305. The Cytoplasmic segment spans residues K306–K324. A helical transmembrane segment spans residues A325–D342. The Extracellular portion of the chain corresponds to E343–S346. A helical transmembrane segment spans residues L347–V364. Residues K365 to K402 are Cytoplasmic-facing. Residues Y403 to I423 traverse the membrane as a helical segment. The Extracellular portion of the chain corresponds to K424 to W428. The chain crosses the membrane as a helical span at residues Y429 to L449. The Cytoplasmic portion of the chain corresponds to P450–D538.

It belongs to the CLPTM1 family. Ubiquitously expressed.

It is found in the endoplasmic reticulum membrane. The catalysed reaction is a 6-(alpha-D-glucosaminyl)-1-(1,2-diacyl-sn-glycero-3-phospho)-1D-myo-inositol(in) = a 6-(alpha-D-glucosaminyl)-1-(1,2-diacyl-sn-glycero-3-phospho)-1D-myo-inositol(out). It catalyses the reaction 6-(alpha-D-glucosaminyl)-(1-octadecanoyl,2-(9Z)-octadecenoyl-sn-glycero-3-phospho)-1D-myo-inositol(in) = 6-(alpha-D-glucosaminyl)-(1-octadecanoyl,2-(9Z)-octadecenoyl-sn-glycero-3-phospho)-1D-myo-inositol(out). It carries out the reaction a 1,2-diacyl-sn-glycero-3-phospho-(1D-myo-inositol)(in) = a 1,2-diacyl-sn-glycero-3-phospho-(1D-myo-inositol)(out). The enzyme catalyses a 1,2-diacyl-sn-glycero-3-phosphocholine(in) = a 1,2-diacyl-sn-glycero-3-phosphocholine(out). The catalysed reaction is a 1,2-diacyl-sn-glycero-3-phosphoethanolamine(in) = a 1,2-diacyl-sn-glycero-3-phosphoethanolamine(out). In terms of biological role, scramblase that mediates the translocation of glucosaminylphosphatidylinositol (alpha-D-GlcN-(1-6)-(1,2-diacyl-sn-glycero-3-phospho)-1D-myo-inositol, GlcN-PI) across the endoplasmic reticulum (ER) membrane, from the cytosolic leaflet to the luminal leaflet of the ER membrane, where it participates in the biosynthesis of glycosylphosphatidylinositol (GPI). GPI is a lipid glycoconjugate involved in post-translational modification of proteins. Can also translocate 1,2-diacyl-sn-glycero-3-phospho-(1D-myo-inositol) (phosphatidylinositol or PI), as well as several other phospholipids (1,2-diacyl-sn-glycero-3-phosphocholine, 1,2-diacyl-sn-glycero-3-phosphoethanolamine), and N-acetylglucosaminylphosphatidylinositol (GlcNAc-PI) in vitro. In Homo sapiens (Human), this protein is Lipid scramblase CLPTM1L (CLPTM1L).